The chain runs to 1068 residues: WD repeat-containing protein on Y chromosome (1068 aa).

7 WD repeats span residues Asp-155–Ala-199, Ser-201–Phe-242, Arg-322–Ala-361, Gly-365–Thr-404, Thr-455–Ile-494, Ile-507–Asn-546, and Phe-594–Ser-634. Residues Ser-657–Asp-687 form a disordered region. WD repeat units follow at residues Lys-746–Thr-785 and Gly-829–Leu-868. Residues Ser-1026–Ser-1068 are disordered. The segment covering Asp-1039–Ile-1056 has biased composition (basic and acidic residues).

The protein is WD repeat-containing protein on Y chromosome of Drosophila yakuba (Fruit fly).